The following is a 378-amino-acid chain: Ribosomal RNA large subunit methyltransferase G (378 aa).

This sequence belongs to the methyltransferase superfamily. RlmG family.

It is found in the cytoplasm. It carries out the reaction guanosine(1835) in 23S rRNA + S-adenosyl-L-methionine = N(2)-methylguanosine(1835) in 23S rRNA + S-adenosyl-L-homocysteine + H(+). In terms of biological role, specifically methylates the guanine in position 1835 (m2G1835) of 23S rRNA. The sequence is that of Ribosomal RNA large subunit methyltransferase G from Escherichia coli (strain ATCC 8739 / DSM 1576 / NBRC 3972 / NCIMB 8545 / WDCM 00012 / Crooks).